The primary structure comprises 1116 residues: Anillin (1116 aa).

Composition is skewed to basic and acidic residues over residues 1 to 25 (MDPF…KMAD) and 85 to 94 (KQPKTPELPK). 4 disordered regions span residues 1 to 188 (MDPF…PVGR), 205 to 257 (DLSH…PKDT), 304 to 363 (KPNE…KVAT), and 443 to 522 (NVWT…PRLV). A compositionally biased stretch (polar residues) spans 101 to 119 (ASHQQLRATNQTPQVSLLS). Positions 120–133 (SDKELTASDVKDAS) are enriched in basic and acidic residues. The interactions with myh9 and myh10 stretch occupies residues 142 to 254 (LADQRRYWDN…QDTTSCSQRP (113 aa)). A compositionally biased stretch (low complexity) spans 226–242 (SKESTTSSASASMNSHS). Residues 255–418 (KDTTVNKAVC…LKQNDISSTA (164 aa)) form an interaction with F-actin region. 2 stretches are compositionally biased toward polar residues: residues 304–326 (KPNE…SSPQ) and 336–356 (YSYQ…VQTQ). A coiled-coil region spans residues 416–443 (STASLAQQQKKEREKELAALRGRYDRRN). Over residues 453 to 472 (QGTFPETSSNLPTSDVASCS) the composition is skewed to polar residues. Residues 975–1099 (SVEDKGFLTM…WMQKLNQFLV (125 aa)) form the PH domain.

In terms of assembly, interacts with and bundles F-actin. Interacts with the non-muscle myosin II heavy chains myh9 and myh10, and these interactions may be enhanced by the phosphorylation of myosin II regulatory light chain by mylk.

It localises to the nucleus. Its subcellular location is the cytoplasm. The protein resides in the cytoskeleton. The protein localises to the cell cortex. It is found in the cell projection. It localises to the bleb. In terms of biological role, required for cytokinesis. Essential for the structural integrity of the cleavage furrow and for completion of cleavage furrow ingression. Plays a role in bleb assembly during metaphase and anaphase of mitosis. May play a significant role in podocyte cell migration. In Xenopus laevis (African clawed frog), this protein is Anillin (anln).